We begin with the raw amino-acid sequence, 692 residues long: DNA ligase (692 aa).

NAD(+)-binding positions include 35-39, 88-89, and E117; these read DLVYD and SL. K119 (N6-AMP-lysine intermediate) is an active-site residue. NAD(+) contacts are provided by R140, E176, K301, and K325. Zn(2+)-binding residues include C416, C419, C434, and C439. The region spanning 611–692 is the BRCT domain; that stretch reads LTNQSNSWAS…FDLIKNSKKT (82 aa).

The protein belongs to the NAD-dependent DNA ligase family. LigA subfamily. The cofactor is Mg(2+). Mn(2+) is required as a cofactor.

The catalysed reaction is NAD(+) + (deoxyribonucleotide)n-3'-hydroxyl + 5'-phospho-(deoxyribonucleotide)m = (deoxyribonucleotide)n+m + AMP + beta-nicotinamide D-nucleotide.. DNA ligase that catalyzes the formation of phosphodiester linkages between 5'-phosphoryl and 3'-hydroxyl groups in double-stranded DNA using NAD as a coenzyme and as the energy source for the reaction. It is essential for DNA replication and repair of damaged DNA. The protein is DNA ligase of Mesomycoplasma hyopneumoniae (strain 232) (Mycoplasma hyopneumoniae).